Reading from the N-terminus, the 72-residue chain is Osmotically-inducible lipoprotein B (72 aa).

An N-terminal signal peptide occupies residues 1-23 (MFMTSKKMAAAVLAITVAMSLSA). Cysteine 24 is lipidated: N-palmitoyl cysteine. A lipid anchor (S-diacylglycerol cysteine) is attached at cysteine 24.

It is found in the cell membrane. Functionally, provides resistance to osmotic stress. May be important for stationary-phase survival. This is Osmotically-inducible lipoprotein B (osmB) from Salmonella typhimurium (strain LT2 / SGSC1412 / ATCC 700720).